The chain runs to 350 residues: 3-isopropylmalate dehydrogenase (350 aa).

NAD(+) is bound at residue 76–87; that stretch reads GPKWDNAPKRPE. Residues R94, R104, R132, and D217 each coordinate substrate. Mg(2+) contacts are provided by D217, D241, and D245. 275–287 contributes to the NAD(+) binding site; that stretch reads GSAPDIANQNIAN.

Belongs to the isocitrate and isopropylmalate dehydrogenases family. LeuB type 1 subfamily. As to quaternary structure, homodimer. Mg(2+) is required as a cofactor. Requires Mn(2+) as cofactor.

The protein resides in the cytoplasm. It catalyses the reaction (2R,3S)-3-isopropylmalate + NAD(+) = 4-methyl-2-oxopentanoate + CO2 + NADH. It participates in amino-acid biosynthesis; L-leucine biosynthesis; L-leucine from 3-methyl-2-oxobutanoate: step 3/4. Its function is as follows. Catalyzes the oxidation of 3-carboxy-2-hydroxy-4-methylpentanoate (3-isopropylmalate) to 3-carboxy-4-methyl-2-oxopentanoate. The product decarboxylates to 4-methyl-2 oxopentanoate. This Listeria monocytogenes serovar 1/2a (strain ATCC BAA-679 / EGD-e) protein is 3-isopropylmalate dehydrogenase.